Reading from the N-terminus, the 211-residue chain is Probable nicotinate-nucleotide adenylyltransferase (211 aa).

It belongs to the NadD family.

The enzyme catalyses nicotinate beta-D-ribonucleotide + ATP + H(+) = deamido-NAD(+) + diphosphate. It participates in cofactor biosynthesis; NAD(+) biosynthesis; deamido-NAD(+) from nicotinate D-ribonucleotide: step 1/1. Catalyzes the reversible adenylation of nicotinate mononucleotide (NaMN) to nicotinic acid adenine dinucleotide (NaAD). This Wigglesworthia glossinidia brevipalpis protein is Probable nicotinate-nucleotide adenylyltransferase.